The primary structure comprises 130 residues: MVMLDLLSNALIQIKNAEIMGKKQVVIWPVNKLIYHTLRVLQRYGYVGEIEYIDDGRGGKYVVQLLGKINDIGPIRPRYPVKYREIVQWEQKFLPARQIGILVISTSQGVMSHIEAKERKIGGVLLAYVY.

This sequence belongs to the universal ribosomal protein uS8 family. Part of the 30S ribosomal subunit.

Its function is as follows. One of the primary rRNA binding proteins, it binds directly to 16S rRNA central domain where it helps coordinate assembly of the platform of the 30S subunit. This is Small ribosomal subunit protein uS8 from Pyrobaculum islandicum (strain DSM 4184 / JCM 9189 / GEO3).